Reading from the N-terminus, the 737-residue chain is Translation initiation factor IF-2 (737 aa).

The disordered stretch occupies residues 55-152; the sequence is KKKEHIQHNK…PVPPRKNKPL (98 aa). The span at 60 to 70 shows a compositional bias: basic and acidic residues; the sequence is IQHNKNKDNFH. Basic residues predominate over residues 88–98; it reads KNVHKNNRKRS. The span at 105–121 shows a compositional bias: low complexity; it reads NNNAKNGQRNNRNNRSN. The span at 122–131 shows a compositional bias: basic residues; it reads NKFKNKRNNN. Over residues 132-142 the composition is skewed to low complexity; that stretch reads NKRNNNFKKGN. In terms of domain architecture, tr-type G spans 238-407; the sequence is KRPPVVTIMG…LLEAEMLELH (170 aa). A G1 region spans residues 247-254; the sequence is GHVDHGKT. 247–254 is a binding site for GTP; the sequence is GHVDHGKT. The segment at 272–276 is G2; sequence GITQH. The tract at residues 293–296 is G3; the sequence is DTPG. GTP contacts are provided by residues 293–297 and 347–350; these read DTPGH and NKID. A G4 region spans residues 347 to 350; that stretch reads NKID. The interval 383–385 is G5; it reads SAK.

This sequence belongs to the TRAFAC class translation factor GTPase superfamily. Classic translation factor GTPase family. IF-2 subfamily.

Its subcellular location is the cytoplasm. Its function is as follows. One of the essential components for the initiation of protein synthesis. Protects formylmethionyl-tRNA from spontaneous hydrolysis and promotes its binding to the 30S ribosomal subunits. Also involved in the hydrolysis of GTP during the formation of the 70S ribosomal complex. The chain is Translation initiation factor IF-2 from Ligilactobacillus salivarius (strain UCC118) (Lactobacillus salivarius).